The following is a 130-amino-acid chain: Phosphoribosyl-AMP cyclohydrolase (130 aa).

Aspartate 80 serves as a coordination point for Mg(2+). Cysteine 81 is a binding site for Zn(2+). Mg(2+) is bound by residues aspartate 82 and aspartate 84. The Zn(2+) site is built by cysteine 98 and cysteine 105.

Belongs to the PRA-CH family. Homodimer. The cofactor is Mg(2+). Requires Zn(2+) as cofactor.

It is found in the cytoplasm. The enzyme catalyses 1-(5-phospho-beta-D-ribosyl)-5'-AMP + H2O = 1-(5-phospho-beta-D-ribosyl)-5-[(5-phospho-beta-D-ribosylamino)methylideneamino]imidazole-4-carboxamide. It functions in the pathway amino-acid biosynthesis; L-histidine biosynthesis; L-histidine from 5-phospho-alpha-D-ribose 1-diphosphate: step 3/9. Functionally, catalyzes the hydrolysis of the adenine ring of phosphoribosyl-AMP. The chain is Phosphoribosyl-AMP cyclohydrolase from Oleidesulfovibrio alaskensis (strain ATCC BAA-1058 / DSM 17464 / G20) (Desulfovibrio alaskensis).